Consider the following 154-residue polypeptide: ATP synthase subunit b', chloroplastic (154 aa).

A helical membrane pass occupies residues 22–42 (GTLPLIAIQFLILMFLLNILL).

It belongs to the ATPase B chain family. In terms of assembly, F-type ATPases have 2 components, F(1) - the catalytic core - and F(0) - the membrane proton channel. F(1) has five subunits: alpha(3), beta(3), gamma(1), delta(1), epsilon(1). F(0) has four main subunits: a(1), b(1), b'(1) and c(10-14). The alpha and beta chains form an alternating ring which encloses part of the gamma chain. F(1) is attached to F(0) by a central stalk formed by the gamma and epsilon chains, while a peripheral stalk is formed by the delta, b and b' chains.

The protein resides in the plastid. The protein localises to the chloroplast thylakoid membrane. In terms of biological role, f(1)F(0) ATP synthase produces ATP from ADP in the presence of a proton or sodium gradient. F-type ATPases consist of two structural domains, F(1) containing the extramembraneous catalytic core and F(0) containing the membrane proton channel, linked together by a central stalk and a peripheral stalk. During catalysis, ATP synthesis in the catalytic domain of F(1) is coupled via a rotary mechanism of the central stalk subunits to proton translocation. Functionally, component of the F(0) channel, it forms part of the peripheral stalk, linking F(1) to F(0). The b'-subunit is a diverged and duplicated form of b found in plants and photosynthetic bacteria. The sequence is that of ATP synthase subunit b', chloroplastic from Vaucheria litorea (Yellow-green alga).